The sequence spans 349 residues: Short-wave-sensitive opsin 1 (349 aa).

Residues Met-1–Ala-34 are Extracellular-facing. Asn-15 is a glycosylation site (N-linked (GlcNAc...) asparagine). A helical transmembrane segment spans residues Phe-35–Ala-59. Residues Thr-60–Asn-71 lie on the Cytoplasmic side of the membrane. Residues Tyr-72–Cys-97 traverse the membrane as a helical segment. The Extracellular portion of the chain corresponds to Tyr-98 to Glu-111. Cysteines 108 and 185 form a disulfide. Residues Ala-112–Phe-131 form a helical membrane-spanning segment. Over Glu-132 to His-150 the chain is Cytoplasmic. Residues Ala-151–Ser-174 traverse the membrane as a helical segment. At Arg-175 to Tyr-200 the chain is on the extracellular side. A helical membrane pass occupies residues Tyr-201 to Leu-228. Residues Arg-229–His-250 lie on the Cytoplasmic side of the membrane. The chain crosses the membrane as a helical span at residues Met-251–Val-274. Residues Asn-275–Asp-282 are Extracellular-facing. A helical transmembrane segment spans residues Leu-283–Met-307. N6-(retinylidene)lysine is present on Lys-294. Residues Asn-308–Asn-349 are Cytoplasmic-facing. The interval Glu-327 to Asn-349 is disordered. The segment covering Leu-330–Asn-349 has biased composition (polar residues).

It belongs to the G-protein coupled receptor 1 family. Opsin subfamily. Phosphorylated on some or all of the serine and threonine residues present in the C-terminal region.

Its subcellular location is the cell membrane. The protein localises to the photoreceptor inner segment. The protein resides in the cell projection. It is found in the cilium. It localises to the photoreceptor outer segment. Its subcellular location is the cytoplasm. The protein localises to the perinuclear region. Its function is as follows. Visual pigments are the light-absorbing molecules that mediate vision. They consist of an apoprotein, opsin, covalently linked to cis-retinal. Required for the maintenance of cone outer segment organization in the ventral retina, but not essential for the maintenance of functioning cone photoreceptors. Involved in ensuring correct abundance and localization of retinal membrane proteins. May increase spectral sensitivity in dim light. The protein is Short-wave-sensitive opsin 1 (OPN1SW) of Bos taurus (Bovine).